Consider the following 232-residue polypeptide: Aspartate racemase (232 aa).

A substrate-binding site is contributed by 49-51 (DRT). The Proton donor/acceptor role is filled by Cys-84. Residues 85-87 (NTA) and Lys-166 each bind substrate. Cys-195 acts as the Proton donor/acceptor in catalysis.

Belongs to the aspartate/glutamate racemases family.

It catalyses the reaction L-aspartate = D-aspartate. This is Aspartate racemase from Thermococcus sp. (strain KS-8).